Consider the following 250-residue polypeptide: mRNA-decapping protein g5R (250 aa).

A Nudix hydrolase domain is found at glutamine 97–lysine 243. The Nudix box motif lies at glycine 132–glycine 153. Position 138 (glutamate 138) interacts with Mg(2+). Glutamate 147 functions as the Nucleophile in the catalytic mechanism. Mg(2+)-binding residues include glutamate 151 and aspartate 173.

It belongs to the Nudix hydrolase family. DIPP subfamily. In terms of assembly, interacts with host RPL23A. Requires Mg(2+) as cofactor. Mn(2+) is required as a cofactor.

Its subcellular location is the host rough endoplasmic reticulum. The enzyme catalyses diphospho-myo-inositol polyphosphate + H2O = myo-inositol polyphosphate + phosphate.. Decapping enzyme required for the removal of the 5'-end m7GpppN cap tethered to viral and host mRNAs to allow their decay in cells. May therefore accelerate viral and cellular mRNA turnover to eliminate competing host mRNAs and allow stage-specific synthesis of viral proteins. Acceleration of the turnover of cellular transcripts may even promote the shutoff of host protein synthesis. In addition to the mRNA cap, g5R also efficiently hydrolyzes diphosphoinositol polyphosphates. Down-regulation of the level of PP-InsP5 (diphosphoinositol pentakisphosphate) may play a role in viral manipulation of the cellular secretory pathway, a step necessary for the formation of virions. Binds viral and cellular poly(A) mRNAs, thereby decreasing both types of mRNAs. The sequence is that of mRNA-decapping protein g5R from African swine fever virus (isolate Tick/South Africa/Pretoriuskop Pr4/1996) (ASFV).